The following is a 760-amino-acid chain: Protein HEADING DATE 3B (760 aa).

2 stretches are compositionally biased toward gly residues: residues 1–12 (MATRGGGGGGGG) and 60–70 (SGGGGGGGVGG). Disordered stretches follow at residues 1–120 (MATR…KINK), 144–169 (SRST…RLAD), 236–262 (VKSR…EKSS), and 285–346 (TGII…IEET). Over residues 71-87 (SPAHSTSAASQSQSQSQ) the composition is skewed to low complexity. The segment covering 94 to 107 (SLFQPFNVPSNRPG) has biased composition (polar residues). Positions 108 to 120 (HSTEKINSDKINK) are enriched in basic and acidic residues. The segment covering 236-248 (VKSRTPLKDKEME) has biased composition (basic and acidic residues). Positions 349 to 355 (KRKRLLE) match the Nuclear localization signal motif. Disordered regions lie at residues 485–543 (LQQP…GVQL) and 707–760 (FPTV…QRDD). Composition is skewed to polar residues over residues 511–522 (QRDQAATNGVSK), 531–543 (ASDN…GVQL), and 707–730 (FPTV…QTNV).

As to expression, expressed in mesophyll cells of young leaves, anthers, stigmas and the top of lemmas.

It localises to the nucleus. In terms of biological role, involved in the regulation of flowering time under short day (SD) and long day (LD) conditions. Functions as a floral promoter by negatively regulating GHD7, a repressor of the photoperiodic control of flowering. Acts as a floral activator in the LD photoperiodic pathway. Involved in blue light-induced activation of EHD1 expression to promote flowering under SD conditions. The chain is Protein HEADING DATE 3B (HD3B) from Oryza sativa subsp. japonica (Rice).